The sequence spans 103 residues: N(4)-acetylcytidine amidohydrolase (103 aa).

The region spanning 7 to 93 (TFFERFEQDI…VIAEIYPGLE (87 aa)) is the ASCH domain. Lys-21 acts as the Proton acceptor in catalysis. Thr-24 acts as the Nucleophile in catalysis. Glu-74 acts as the Proton donor in catalysis.

It belongs to the N(4)-acetylcytidine amidohydrolase family.

The enzyme catalyses N(4)-acetylcytidine + H2O = cytidine + acetate + H(+). The catalysed reaction is N(4)-acetyl-2'-deoxycytidine + H2O = 2'-deoxycytidine + acetate + H(+). It carries out the reaction N(4)-acetylcytosine + H2O = cytosine + acetate + H(+). Its function is as follows. Catalyzes the hydrolysis of N(4)-acetylcytidine (ac4C). In Shewanella putrefaciens (strain CN-32 / ATCC BAA-453), this protein is N(4)-acetylcytidine amidohydrolase.